Consider the following 263-residue polypeptide: Endonuclease 8 (263 aa).

The active-site Schiff-base intermediate with DNA is the Pro-2. Glu-3 acts as the Proton donor in catalysis. Lys-53 serves as the catalytic Proton donor; for beta-elimination activity. DNA is bound by residues Gln-70, Arg-125, and Asn-169. An FPG-type zinc finger spans residues 229–263 (KVFHRDGEACERCGGIIEKTTLSSRPFYWCPHCQK). Catalysis depends on Arg-253, which acts as the Proton donor; for delta-elimination activity.

It belongs to the FPG family. The cofactor is Zn(2+).

The catalysed reaction is 2'-deoxyribonucleotide-(2'-deoxyribose 5'-phosphate)-2'-deoxyribonucleotide-DNA = a 3'-end 2'-deoxyribonucleotide-(2,3-dehydro-2,3-deoxyribose 5'-phosphate)-DNA + a 5'-end 5'-phospho-2'-deoxyribonucleoside-DNA + H(+). Involved in base excision repair of DNA damaged by oxidation or by mutagenic agents. Acts as a DNA glycosylase that recognizes and removes damaged bases. Has a preference for oxidized pyrimidines, such as thymine glycol, 5,6-dihydrouracil and 5,6-dihydrothymine. Has AP (apurinic/apyrimidinic) lyase activity and introduces nicks in the DNA strand. Cleaves the DNA backbone by beta-delta elimination to generate a single-strand break at the site of the removed base with both 3'- and 5'-phosphates. In Salmonella paratyphi A (strain AKU_12601), this protein is Endonuclease 8.